A 94-amino-acid polypeptide reads, in one-letter code: Small ribosomal subunit protein uS19c (94 aa).

The protein belongs to the universal ribosomal protein uS19 family.

Its subcellular location is the plastid. The protein resides in the chloroplast. Functionally, protein S19 forms a complex with S13 that binds strongly to the 16S ribosomal RNA. In Cyanidioschyzon merolae (strain NIES-3377 / 10D) (Unicellular red alga), this protein is Small ribosomal subunit protein uS19c.